The primary structure comprises 568 residues: MSNSKEIKSFLWTQSLRRELSGFCTNTRVQVIKDAQSLLHGLDFSEVSNIQRLMRKEKRDDSDLKRLRDLNQTVNNLVELKSSQQKNTLRVGALTSDDLLVLAADLDRLKAKVNRSERPLTGGVYMGNLTQQQLDQRKILLQLVGMGGSRVPPRGGDGIVRVWDVRNPDLLNNQFGTMPSLTLACLCKQGQEDLSDVVKALTDLGLVYTAKYPNLSDLDKLTHTHPVLGLIDGNKSAINISGYNFSLNAAVKAGASLLDGGNMLETIKVTPKNIDTILKCVLKVKRSVGMFVSDTPGERNPYENILYKICLSGDGWPYIACRTSISGRAWDNTEVDLGTNKDPINKGPPTSNKTAGAAGFNAGLTYSQMMELKDSMLQIDPTAKTWVDIEGRADDPVEIAIYQPSNGHYIHFYREPTDIKQFRQDAKYSHGIDVQDLFTTQPGLTSAVLENLPKNMVLTCQGVEDIRKLLDSQGRKDIKLIDVSMQKADARKFEHQIWDEYKHLCSMHTGIVVEKKKRGGKEEITPHCALLDCLMFEATTRNSLDIVIPRPVLSKDLVFRSATPKVIL.

Positions 54–240 are binding site for the cap structure m7GTP; sequence MRKEKRDDSD…IDGNKSAINI (187 aa). Positions 388 and 390 each coordinate Mn(2+). Glutamate 398, cysteine 505, histidine 508, and cysteine 528 together coordinate Zn(2+). Aspartate 532 contributes to the Mn(2+) binding site.

This sequence belongs to the arenaviridae nucleocapsid protein family. Homomultimerizes to form the nucleocapsid. Binds to viral genomic RNA. Interacts with glycoprotein G2. Interacts with protein Z; this interaction probably directs the encapsidated genome to budding sites. Interacts with protein L; this interaction does not interfere with Z-L interaction. Interacts with host IKBKE (via Protein kinase domain); the interaction inhibits IKBKE kinase activity.

The protein resides in the virion. Its subcellular location is the host cytoplasm. Its function is as follows. Encapsidates the genome, protecting it from nucleases. The encapsidated genomic RNA is termed the nucleocapsid (NC). Serves as template for viral transcription and replication. The increased presence of protein N in host cell does not seem to trigger the switch from transcription to replication as observed in other negative strain RNA viruses. Through the interaction with host IKBKE, strongly inhibits the phosphorylation and nuclear translocation of host IRF3, a protein involved in interferon activation pathway, leading to the inhibition of interferon-beta and IRF3-dependent promoters activation. Also encodes a functional 3'-5' exoribonuclease that degrades preferentially dsRNA substrates and thereby participates in the suppression of interferon induction. The sequence is that of Nucleoprotein from Praomys (African soft-furred rats).